The following is a 1407-amino-acid chain: DNA-directed RNA polymerase subunit beta' (1407 aa).

Residues Cys70, Cys72, Cys85, and Cys88 each coordinate Zn(2+). The Mg(2+) site is built by Asp460, Asp462, and Asp464. Cys814, Cys888, Cys895, and Cys898 together coordinate Zn(2+).

The protein belongs to the RNA polymerase beta' chain family. The RNAP catalytic core consists of 2 alpha, 1 beta, 1 beta' and 1 omega subunit. When a sigma factor is associated with the core the holoenzyme is formed, which can initiate transcription. Mg(2+) is required as a cofactor. The cofactor is Zn(2+).

It carries out the reaction RNA(n) + a ribonucleoside 5'-triphosphate = RNA(n+1) + diphosphate. Functionally, DNA-dependent RNA polymerase catalyzes the transcription of DNA into RNA using the four ribonucleoside triphosphates as substrates. This is DNA-directed RNA polymerase subunit beta' from Cellvibrio japonicus (strain Ueda107) (Pseudomonas fluorescens subsp. cellulosa).